A 146-amino-acid chain; its full sequence is Large ribosomal subunit protein uL15 (146 aa).

Residues 1–18 (MKLHELKPSEGSRKERNR) are compositionally biased toward basic and acidic residues. Residues 1–57 (MKLHELKPSEGSRKERNRVGRGIGSGNGKTSGKGHKGQNARSGGGVRPGFEGGQMPL) are disordered. Gly residues-rich tracts occupy residues 21–31 (RGIGSGNGKTS) and 42–52 (SGGGVRPGFEG).

The protein belongs to the universal ribosomal protein uL15 family. As to quaternary structure, part of the 50S ribosomal subunit.

Functionally, binds to the 23S rRNA. The chain is Large ribosomal subunit protein uL15 from Bacillus pumilus (strain SAFR-032).